The primary structure comprises 984 residues: Zinc finger and BTB domain-containing protein 4 (984 aa).

The BTB domain maps to 30–131 (CDVTLIAGDT…IYSARLALPG (102 aa)). Residue Lys40 forms a Glycyl lysine isopeptide (Lys-Gly) (interchain with G-Cter in SUMO2) linkage. Disordered stretches follow at residues 71 to 104 (TGGS…PPRV), 172 to 210 (MVTS…RRPF), and 227 to 262 (THEA…ASAL). A compositionally biased stretch (low complexity) spans 74–88 (SAPSPATTTAASSSS). The interaction with CBFA2T3 stretch occupies residues 165-324 (VPPAPSSMVT…CRYCEKVFAL (160 aa)). A C2H2-type 1; atypical zinc finger spans residues 210-232 (FPCPRCGKSFIHPKRLQTHEAQC). The segment covering 242–255 (AGLGPGGSGPGGPA) has biased composition (gly residues). 3 consecutive C2H2-type zinc fingers follow at residues 285–307 (YVCA…SNVH), 313–335 (YPCR…EVWH), and 341–364 (YQCI…RAFH). A Phosphoserine modification is found at Ser367. Residues 461–575 (GSSSSGAAGG…GSSQLQAPPP (115 aa)) form a disordered region. Positions 467 to 477 (AAGGGPVGTGG) are enriched in gly residues. Composition is skewed to low complexity over residues 478–488 (SQAASVITYTT) and 507–529 (ATPT…ATAT). Residue Lys548 forms a Glycyl lysine isopeptide (Lys-Gly) (interchain with G-Cter in SUMO2) linkage. The span at 552 to 565 (GVSGSGGSPTGTGR) shows a compositional bias: gly residues. Residue Lys590 forms a Glycyl lysine isopeptide (Lys-Gly) (interchain with G-Cter in SUMO2) linkage. Disordered stretches follow at residues 593–696 (ISET…GERR), 713–734 (RKHQ…RSST), 756–836 (QRHA…VAGG), 853–876 (GGSR…ASEG), and 947–984 (QTAP…GDVG). Positions 604–627 (SGEEVEESEEEEEEEEEEDQEDQE) are enriched in acidic residues. Residues 628–637 (ESKAGGEDQL) show a composition bias toward basic and acidic residues. 2 consecutive C2H2-type zinc fingers follow at residues 697–719 (HRCG…QEAH) and 736–758 (FTCP…GQRH). Phosphothreonine; by HIPK2 occurs at positions 766 and 768. The span at 807–819 (AAAAAAEASESAS) shows a compositional bias: low complexity. The span at 948-966 (TAPPTPPTPPPPLPLPVPP) shows a compositional bias: pro residues. Thr955 carries the phosphothreonine; by HIPK2 modification.

In terms of assembly, interacts with HIPK2. Interacts with CBFA2T3. Interacts with ZBTB38. Post-translationally, phosphorylated by HIPK2. This phosphorylation reduces stability and triggers ZBTB4 protein degradation in response to DNA damage.

It is found in the nucleus. The protein resides in the chromosome. Its function is as follows. Transcriptional repressor with bimodal DNA-binding specificity. Represses transcription in a methyl-CpG-dependent manner. Binds with a higher affinity to methylated CpG dinucleotides in the consensus sequence 5'-CGCG-3' but can also bind to the non-methylated consensus sequence 5'-CTGCNA-3' also known as the consensus kaiso binding site (KBS). Can also bind specifically to a single methyl-CpG pair and can bind hemimethylated DNA but with a lower affinity compared to methylated DNA. Plays a role in postnatal myogenesis, may be involved in the regulation of satellite cells self-renewal. The sequence is that of Zinc finger and BTB domain-containing protein 4 (Zbtb4) from Rattus norvegicus (Rat).